We begin with the raw amino-acid sequence, 251 residues long: Pyruvate formate-lyase-activating enzyme (251 aa).

The 230-residue stretch at 15 to 244 (VDGPGLRYIL…KAAYRYVNFK (230 aa)) folds into the Radical SAM core domain. Cys29, Cys33, and Cys36 together coordinate [4Fe-4S] cluster. Residues 35–37 (YCH), Gly79, 134–136 (DIK), and His207 contribute to the S-adenosyl-L-methionine site.

Belongs to the organic radical-activating enzymes family. [4Fe-4S] cluster is required as a cofactor.

It localises to the cytoplasm. The catalysed reaction is glycyl-[formate C-acetyltransferase] + reduced [flavodoxin] + S-adenosyl-L-methionine = glycin-2-yl radical-[formate C-acetyltransferase] + semiquinone [flavodoxin] + 5'-deoxyadenosine + L-methionine + H(+). Activation of pyruvate formate-lyase under anaerobic conditions by generation of an organic free radical, using S-adenosylmethionine and reduced flavodoxin as cosubstrates to produce 5'-deoxy-adenosine. This Staphylococcus aureus (strain N315) protein is Pyruvate formate-lyase-activating enzyme (pflA).